Reading from the N-terminus, the 134-residue chain is Small ribosomal subunit protein uS8c (134 aa).

It belongs to the universal ribosomal protein uS8 family. Part of the 30S ribosomal subunit.

It is found in the plastid. It localises to the chloroplast. In terms of biological role, one of the primary rRNA binding proteins, it binds directly to 16S rRNA central domain where it helps coordinate assembly of the platform of the 30S subunit. This is Small ribosomal subunit protein uS8c (rps8) from Coffea arabica (Arabian coffee).